Consider the following 423-residue polypeptide: CDP-diacylglycerol--serine O-phosphatidyltransferase 2 (423 aa).

9 helical membrane-spanning segments follow: residues 38-58, 77-97, 103-123, 195-215, 222-242, 294-314, 319-339, 359-379, and 390-410; these read PHTISVLLVGACLLIWASGAL, WAMIAVFLAYCTLQAPSTILI, VWRLVHGLAVVYLVALAFLLF, LLLWVLSIGFELMELTFRHML, WWDSIILDILICNWFGIWAGM, FVQVLFLCVVFMTVELNTFFL, WIPPRNPLVVYRLILWWLIAI, GAFCWLSLAICIVELLICMKF, and TWLIIFWSSVGVALVVFLLAW.

Belongs to the CDP-alcohol phosphatidyltransferase class-I family.

Its subcellular location is the endoplasmic reticulum membrane. The catalysed reaction is a CDP-1,2-diacyl-sn-glycerol + L-serine = a 1,2-diacyl-sn-glycero-3-phospho-L-serine + CMP + H(+). It participates in phospholipid metabolism; phosphatidylethanolamine biosynthesis; phosphatidylethanolamine from CDP-diacylglycerol: step 1/2. In terms of biological role, catalyzes a base-exchange reaction in which the polar head group of phosphatidylethanolamine (PE) or phosphatidylcholine (PC) is replaced by L-serine. This Oryza sativa subsp. japonica (Rice) protein is CDP-diacylglycerol--serine O-phosphatidyltransferase 2 (PSS2).